Consider the following 411-residue polypeptide: Lysosome-associated membrane glycoprotein 2 (411 aa).

Positions 1–26 (MRLLSPVTGSKLVLLFLFLGAVRSDA) are cleaved as a signal peptide. The first lumenal domain stretch occupies residues 27–188 (LKLNLTDSKG…SKHEQVCKED (162 aa)). Residues 27–376 (LKLNLTDSKG…QDCSADEDNF (350 aa)) lie on the Lumenal side of the membrane. A disulfide bridge connects residues C38 and C75. Residues N46, N57, N71, N97, N109, N117, N175, N223, N230, N243, N261, N276, N308, N318, and N357 are each glycosylated (N-linked (GlcNAc...) asparagine). C149 and C185 form a disulfide bridge. The segment at 189–229 (KTATTVAPIIHTTVPSPTTTLTPTSIPVPTPTVGNYTISNG) is hinge. The tract at residues 230 to 376 (NATCLLATMG…QDCSADEDNF (147 aa)) is second lumenal domain. C233 and C266 are joined by a disulfide. A disulfide bridge connects residues C332 and C369. A helical membrane pass occupies residues 377-400 (LVPIAVGAALGGVLILVLLAYFIG). The Cytoplasmic segment spans residues 401-411 (LKRHHTGYEQF). Residues 402–405 (KRHH) form an important for binding and subsequent lysosomal degradation of target proteins region.

Belongs to the LAMP family. As to quaternary structure, monomer. Forms large homooligomers. Interacts (via its cytoplasmic region) with HSPA8; HSPA8 mediates recruitment of proteins with a KFERQ motif to the surface of the lysosome for chaperone-mediated autophagy. Interacts with HSP90 in the lysosome lumen; this enhances LAMP2 stability. Interacts with MLLT11. Interacts with ABCB9. Interacts with FURIN. Interacts with CT55; this interaction may be important for LAMP2 protein stability. Interacts with TMEM175; inhibiting the proton channel activity of TMEM175. Forms a ternary complex with RAB7A and RUFY4 (via RUN domain); the interaction with RAB7A is mediated by RUFY4 (via RUN and coiled coil domains). In terms of processing, extensively N-glycosylated. Contains a minor proportion of O-linked glycans. Contains sialylated glycans. As to expression, detected in liver, kidney, spleen and macrophages (at protein level).

The protein localises to the lysosome membrane. The protein resides in the endosome membrane. Its subcellular location is the cell membrane. It localises to the cytoplasmic vesicle. It is found in the autophagosome membrane. Its function is as follows. Lysosomal membrane glycoprotein which plays an important role in lysosome biogenesis, lysosomal pH regulation and autophagy. Acts as an important regulator of lysosomal lumen pH regulation by acting as a direct inhibitor of the proton channel TMEM175, facilitating lysosomal acidification for optimal hydrolase activity. Plays an important role in chaperone-mediated autophagy, a process that mediates lysosomal degradation of proteins in response to various stresses and as part of the normal turnover of proteins with a long biological half-live. Functions by binding target proteins, such as GAPDH, NLRP3 and MLLT11, and targeting them for lysosomal degradation. In the chaperone-mediated autophagy, acts downstream of chaperones, such as HSPA8/HSC70, which recognize and bind substrate proteins and mediate their recruitment to lysosomes, where target proteins bind LAMP2. Plays a role in lysosomal protein degradation in response to starvation. Required for the fusion of autophagosomes with lysosomes during autophagy. Cells that lack LAMP2 express normal levels of VAMP8, but fail to accumulate STX17 on autophagosomes, which is the most likely explanation for the lack of fusion between autophagosomes and lysosomes. Required for normal degradation of the contents of autophagosomes. Required for efficient MHC class II-mediated presentation of exogenous antigens via its function in lysosomal protein degradation; antigenic peptides generated by proteases in the endosomal/lysosomal compartment are captured by nascent MHC II subunits. Is not required for efficient MHC class II-mediated presentation of endogenous antigens. The protein is Lysosome-associated membrane glycoprotein 2 (Lamp2) of Rattus norvegicus (Rat).